Here is a 141-residue protein sequence, read N- to C-terminus: Large ribosomal subunit protein uL16 (141 aa).

The protein belongs to the universal ribosomal protein uL16 family. In terms of assembly, part of the 50S ribosomal subunit.

Its function is as follows. Binds 23S rRNA and is also seen to make contacts with the A and possibly P site tRNAs. In Petrotoga mobilis (strain DSM 10674 / SJ95), this protein is Large ribosomal subunit protein uL16.